An 84-amino-acid chain; its full sequence is U8-theraphotoxin-Hhn1b (84 aa).

The first 21 residues, 1–21 (MKVVLIVCLVWVMAMMELVSC), serve as a signal peptide directing secretion. 4 disulfides stabilise this stretch: Cys23-Cys35, Cys29-Cys44, Cys34-Cys67, and Cys54-Cys75.

This sequence belongs to the AVIT (prokineticin) family. In terms of tissue distribution, expressed by the venom gland.

It localises to the secreted. This chain is U8-theraphotoxin-Hhn1b, found in Cyriopagopus hainanus (Chinese bird spider).